A 702-amino-acid chain; its full sequence is Ferrioxamine B receptor (702 aa).

The first 30 residues, 1-30 (MPLEMFMFATTRMALLIGGAIGGATFPLFA), serve as a signal peptide directing secretion. One can recognise a TBDR plug domain in the interval 55-168 (PDIETPQSVS…PGGIVALTSR (114 aa)). The region spanning 173–702 (DAGGEVKLFA…SIVGSVSWAF (530 aa)) is the TBDR beta-barrel domain.

It belongs to the TonB-dependent receptor family.

The protein localises to the cell outer membrane. Its function is as follows. Ferrioxamine binding and uptake, in association with the TonB protein. In Salmonella typhimurium (strain LT2 / SGSC1412 / ATCC 700720), this protein is Ferrioxamine B receptor (foxA).